The following is a 263-amino-acid chain: Tryptophan synthase alpha chain (263 aa).

Active-site proton acceptor residues include Glu-49 and Asp-60.

The protein belongs to the TrpA family. As to quaternary structure, tetramer of two alpha and two beta chains.

It catalyses the reaction (1S,2R)-1-C-(indol-3-yl)glycerol 3-phosphate + L-serine = D-glyceraldehyde 3-phosphate + L-tryptophan + H2O. It participates in amino-acid biosynthesis; L-tryptophan biosynthesis; L-tryptophan from chorismate: step 5/5. Functionally, the alpha subunit is responsible for the aldol cleavage of indoleglycerol phosphate to indole and glyceraldehyde 3-phosphate. This chain is Tryptophan synthase alpha chain, found in Cereibacter sphaeroides (strain ATCC 17029 / ATH 2.4.9) (Rhodobacter sphaeroides).